Consider the following 364-residue polypeptide: MKFLDEAKVYIKSGDGGGGSVSFRREKFIEFGGPDGGDGGRGGDVWVEAVNGLNTLIDFRYQQHFKATIGTHGMGRNRTGANGSDVTLKVPVGTQIFEEDQETLICDLTVEGQRYCLAHGGNGGFGNAHFKTSTNQAPDWANPGLPGEEKTIWLHLKLIADAGLVGLPNAGKSTFLASVTRARPKIANYPFTTLHPNLGVATIDEREFILADIPGLIEGAHEGVGIGDRFLGHVERTRVLLHLISAQEEKVGKAYKTVKHELEAYGNELTDKAEIVALSQIDVLDDAELKKKTKELAKACGKTPFQISAVTGKGMTEVLRALRDIIVEANTEEKPAKVPKLRHRDMVVTDEGEDKGGDEGDDQP.

Residues 1 to 159 form the Obg domain; that stretch reads MKFLDEAKVY…KTIWLHLKLI (159 aa). Residues 160–327 enclose the OBG-type G domain; the sequence is ADAGLVGLPN…VLRALRDIIV (168 aa). Residues 166 to 173, 191 to 195, 212 to 215, 279 to 282, and 308 to 310 each bind GTP; these read GLPNAGKS, FTTLH, DIPG, SQID, and SAV. The Mg(2+) site is built by serine 173 and threonine 193. The tract at residues 333–364 is disordered; that stretch reads EKPAKVPKLRHRDMVVTDEGEDKGGDEGDDQP.

This sequence belongs to the TRAFAC class OBG-HflX-like GTPase superfamily. OBG GTPase family. As to quaternary structure, monomer. The cofactor is Mg(2+).

The protein localises to the cytoplasm. Its function is as follows. An essential GTPase which binds GTP, GDP and possibly (p)ppGpp with moderate affinity, with high nucleotide exchange rates and a fairly low GTP hydrolysis rate. Plays a role in control of the cell cycle, stress response, ribosome biogenesis and in those bacteria that undergo differentiation, in morphogenesis control. This chain is GTPase Obg, found in Rhizobium johnstonii (strain DSM 114642 / LMG 32736 / 3841) (Rhizobium leguminosarum bv. viciae).